Here is a 282-residue protein sequence, read N- to C-terminus: Stress response regulator protein 1 (282 aa).

Low complexity-rich tracts occupy residues 12 to 30 (NLSR…HSST) and 45 to 58 (NSQS…SNNN). 3 disordered regions span residues 12–31 (NLSR…SSTV), 43–84 (DINS…DDED), and 112–139 (LTPF…TTVV). The segment covering 66–77 (SDYNSYTHNQYY) has biased composition (polar residues). Positions 125 to 139 (SIISSKSSNKSTTVV) are enriched in low complexity. In terms of domain architecture, Response regulatory spans 155–273 (SFLIVDDNII…LDFMANSIDD (119 aa)). 4-aspartylphosphate is present on Asp-206.

Required for stress adaptation, morphogenesis and virulence. The sequence is that of Stress response regulator protein 1 (SRR1) from Candida albicans (strain SC5314 / ATCC MYA-2876) (Yeast).